Here is a 210-residue protein sequence, read N- to C-terminus: Beta-crystallin A4 (210 aa).

The interval 1–25 (MSGMFSGSISETSGMSLQCTKSAGH) is N-terminal arm. Beta/gamma crystallin 'Greek key' domains lie at 26-65 (WKIV…KVLS) and 66-112 (GAWV…RPVA). The segment at 113-118 (CANHRD) is connecting peptide. Beta/gamma crystallin 'Greek key' domains are found at residues 119-160 (SRLT…HVHS) and 161-209 (GAWV…RRIQ).

This sequence belongs to the beta/gamma-crystallin family. Homo/heterodimer, or complexes of higher-order. The structure of beta-crystallin oligomers seems to be stabilized through interactions between the N-terminal arms.

Functionally, crystallins are the dominant structural components of the vertebrate eye lens. This is Beta-crystallin A4 (CRYBA4) from Bos taurus (Bovine).